The following is a 524-amino-acid chain: Probable malate:quinone oxidoreductase (524 aa).

It belongs to the MQO family. It depends on FAD as a cofactor.

The enzyme catalyses (S)-malate + a quinone = a quinol + oxaloacetate. The protein operates within carbohydrate metabolism; tricarboxylic acid cycle; oxaloacetate from (S)-malate (quinone route): step 1/1. The sequence is that of Probable malate:quinone oxidoreductase from Blochmanniella floridana.